The following is a 517-amino-acid chain: Nicotine N-demethylase CYP82E4 (517 aa).

Residues 2–22 traverse the membrane as a helical segment; it reads VFPIEAIVGLVTFTFLFFFLW. A Glycyl lysine isopeptide (Lys-Gly) (interchain with G-Cter in ubiquitin) cross-link involves residue Lys254. Cys457 is a heme binding site.

Belongs to the cytochrome P450 family. CYP82E2 subfamily. The cofactor is heme. In terms of tissue distribution, expressed at low levels in green leaves.

It is found in the membrane. It carries out the reaction (S)-nicotine + reduced [NADPH--hemoprotein reductase] + O2 = (S)-nornicotine + formaldehyde + oxidized [NADPH--hemoprotein reductase] + H2O + H(+). The protein operates within alkaloid biosynthesis; nicotine biosynthesis. In terms of biological role, involved in the biosynthesis of pyridine alkaloid natural products, leading mainly to the production of anabasine, anatabine, nicotine and nornicotine, effective deterrents against herbivores with antiparasitic and pesticide properties (neurotoxins); nornicotine serves as the precursor in the synthesis of the carcinogen compound N'-nitrosonornicotine (NNN). Catalyzes the demethylation of nicotine to form nornicotine. The sequence is that of Nicotine N-demethylase CYP82E4 from Nicotiana tabacum (Common tobacco).